A 417-amino-acid polypeptide reads, in one-letter code: GPI mannosyltransferase 2 (417 aa).

The next 9 helical transmembrane spans lie at 10-30 (FLII…LVWL), 104-124 (IVLK…WIVY), 142-162 (LALT…LISV), 167-187 (IAFT…SFDV), 206-226 (FCFA…LFYV), 239-259 (ITSI…FVYF), 312-332 (IPNF…ITYF), 344-364 (YIWI…VQII), and 394-414 (YYVM…ACFL).

Belongs to the PIGV family.

It localises to the endoplasmic reticulum membrane. It participates in glycolipid biosynthesis; glycosylphosphatidylinositol-anchor biosynthesis. Mannosyltransferase involved in glycosylphosphatidylinositol-anchor biosynthesis. Transfers the second mannose to the glycosylphosphatidylinositol during GPI precursor assembly. This is GPI mannosyltransferase 2 (GPI18) from Kluyveromyces lactis (strain ATCC 8585 / CBS 2359 / DSM 70799 / NBRC 1267 / NRRL Y-1140 / WM37) (Yeast).